The chain runs to 172 residues: Small ribosomal subunit protein uS5 (172 aa).

The S5 DRBM domain maps to 15-78 (LNDKLIFINR…ANAKRNLSRI (64 aa)).

This sequence belongs to the universal ribosomal protein uS5 family. Part of the 30S ribosomal subunit. Contacts proteins S4 and S8.

Its function is as follows. With S4 and S12 plays an important role in translational accuracy. Functionally, located at the back of the 30S subunit body where it stabilizes the conformation of the head with respect to the body. The protein is Small ribosomal subunit protein uS5 of Dehalococcoides mccartyi (strain CBDB1).